A 567-amino-acid polypeptide reads, in one-letter code: Oxygen-dependent choline dehydrogenase (567 aa).

4–33 (DYIIIGAGSAGNVLAARLTEDADVTVLLLE) contacts FAD. The active-site Proton acceptor is His-473.

The protein belongs to the GMC oxidoreductase family. FAD is required as a cofactor.

It carries out the reaction choline + A = betaine aldehyde + AH2. The catalysed reaction is betaine aldehyde + NAD(+) + H2O = glycine betaine + NADH + 2 H(+). It participates in amine and polyamine biosynthesis; betaine biosynthesis via choline pathway; betaine aldehyde from choline (cytochrome c reductase route): step 1/1. Its function is as follows. Involved in the biosynthesis of the osmoprotectant glycine betaine. Catalyzes the oxidation of choline to betaine aldehyde and betaine aldehyde to glycine betaine at the same rate. The protein is Oxygen-dependent choline dehydrogenase of Yersinia pseudotuberculosis serotype O:1b (strain IP 31758).